Here is a 279-residue protein sequence, read N- to C-terminus: Nitrogenase vanadium-iron protein alpha chain (279 aa).

3 residues coordinate [8Fe-7S] cluster: Cys5, Cys31, and Cys94. [7Fe-V-9S-C-homocitryl] cluster is bound at residue Cys213.

This sequence belongs to the NifD/NifK/NifE/NifN family. As to quaternary structure, hexamer of two alpha, two beta, and two delta chains. [8Fe-7S] cluster serves as cofactor. Requires [7Fe-V-9S-C-homocitryl] cluster as cofactor.

It carries out the reaction N2 + 8 reduced [2Fe-2S]-[ferredoxin] + 16 ATP + 16 H2O = H2 + 8 oxidized [2Fe-2S]-[ferredoxin] + 2 NH4(+) + 16 ADP + 16 phosphate + 6 H(+). Its function is as follows. This vanadium-iron protein is part of the nitrogenase complex that catalyzes the key enzymatic reactions in nitrogen fixation. The chain is Nitrogenase vanadium-iron protein alpha chain (vnfD) from Azotobacter salinestris.